Consider the following 113-residue polypeptide: U11-theraphotoxin-Hhn1a (113 aa).

The N-terminal stretch at 1–21 (MNTVRVTFLLVFVLAVSLGQA) is a signal peptide. Positions 22–74 (DKDENRMEMQEKAEQGKSYLDFAENLLLQKLEELEAKLLEEDSEESRNSRQKR) are excised as a propeptide. Cystine bridges form between Cys75–Cys90, Cys82–Cys95, and Cys89–Cys110.

The protein belongs to the neurotoxin 14 (magi-1) family. 01 (HNTX-16) subfamily. In terms of tissue distribution, expressed by the venom gland.

It is found in the secreted. Its function is as follows. Probable ion channel inhibitor. The sequence is that of U11-theraphotoxin-Hhn1a from Cyriopagopus hainanus (Chinese bird spider).